The sequence spans 180 residues: CASP-like protein 5A1 (180 aa).

Residues Met-1–Leu-36 lie on the Cytoplasmic side of the membrane. Residues Gly-37 to Val-57 form a helical membrane-spanning segment. Over Ser-58–Ala-67 the chain is Extracellular. The chain crosses the membrane as a helical span at residues Phe-68 to Val-88. Topologically, residues Asp-89 to Ser-102 are cytoplasmic. The chain crosses the membrane as a helical span at residues Leu-103 to Ala-123. Residues Cys-124–Ala-150 lie on the Extracellular side of the membrane. Residues Ala-151–Trp-171 form a helical membrane-spanning segment. The Cytoplasmic segment spans residues Ser-172 to Phe-180.

The protein belongs to the Casparian strip membrane proteins (CASP) family. In terms of assembly, homodimer and heterodimers.

The protein resides in the cell membrane. This chain is CASP-like protein 5A1, found in Pteridium aquilinum subsp. aquilinum (Bracken fern).